A 147-amino-acid polypeptide reads, in one-letter code: Hemoglobin subunit beta (147 aa).

Valine 2 carries the N-acetylvaline modification. The 145-residue stretch at 3–147 folds into the Globin domain; sequence HLTGEEKAAV…VANALAHKYH (145 aa). A Phosphothreonine modification is found at threonine 13. Phosphoserine is present on serine 45. At lysine 60 the chain carries N6-acetyllysine. Histidine 64 provides a ligand contact to heme b. The residue at position 83 (lysine 83) is an N6-acetyllysine. Residue histidine 93 coordinates heme b. Cysteine 94 bears the S-nitrosocysteine mark. An N6-acetyllysine modification is found at lysine 145.

This sequence belongs to the globin family. In terms of assembly, heterotetramer of two alpha chains and two beta chains. In terms of tissue distribution, red blood cells.

Its function is as follows. Involved in oxygen transport from the lung to the various peripheral tissues. The polypeptide is Hemoglobin subunit beta (HBB) (Cheracebus torquatus (Collared titi monkey)).